The sequence spans 73 residues: UPF0352 protein HD_1515 (73 aa).

It belongs to the UPF0352 family.

The chain is UPF0352 protein HD_1515 from Haemophilus ducreyi (strain 35000HP / ATCC 700724).